The following is a 551-amino-acid chain: MAFNDLLKQVGGVGRFQRIQVTLVVLPLLLMASHNTLQNFTAAIPPHHCRPPAHANLSKDGGLQAWLPQDTQGRPKSCLRFTSPQERPPFLNGTEANGTGTTEPCTDGWIYDNSTFPSTIVTEWDLVCSHRALRQLGQSLYMAGVLIGAMVFGYLADRLGRRKVLILNYLQTAVSGTCAAFSPNFTVYCTFRLLSGMSLAGIALNCMTLNVEWMPIHTRAYVGTLAGYVYSTGQFLLAGVAYAVPHWRYLQLLVSVPFFAFFVYSWFFIESARWYSTPGRLDLTLKALQKVARINGKQEEGAKLSMEVLRTNLQKELTMSKGQASAMELLRCPALRHLFLCLSLLWFATSFAYYGLVMDLQGFGVSIYLIQVIFGAVDLPAKLVCFLVINSLGRRPAQMASLLLAGICILVNGVIPRDQSIVRTSLAVLGKGCLASSFNCIFLYTGELYPTMIRQTGLGMGSTMARVGSIVSPLVSMTSELYPSLPLFIYGAVPVAASAATALLPETLGQPLPDTVQDLESRRRGKPRRQQQEQQKQMVPLQASVQEKNGL.

The Cytoplasmic segment spans residues Met1–Leu23. A helical transmembrane segment spans residues Val24 to Ile44. The Extracellular portion of the chain corresponds to Pro45 to Gln135. N-linked (GlcNAc...) asparagine glycans are attached at residues Asn56, Asn92, and Asn113. A helical membrane pass occupies residues Leu136–Ala156. Residues Asp157–Val164 lie on the Cytoplasmic side of the membrane. Residues Leu165 to Val187 traverse the membrane as a helical segment. At Tyr188 to Ser195 the chain is on the extracellular side. Residues Gly196–Ile216 traverse the membrane as a helical segment. The Cytoplasmic portion of the chain corresponds to His217–Thr224. Residues Leu225–Pro245 form a helical membrane-spanning segment. Residues His246 to Arg248 are Extracellular-facing. Residues Tyr249 to Ile269 form a helical membrane-spanning segment. The Cytoplasmic segment spans residues Glu270–His337. Residues Leu338–Met358 form a helical membrane-spanning segment. The Extracellular portion of the chain corresponds to Asp359–Tyr368. Residues Leu369 to Ile389 form a helical membrane-spanning segment. The Cytoplasmic portion of the chain corresponds to Asn390–Arg395. A helical membrane pass occupies residues Pro396 to Pro416. Over Arg417–Ser425 the chain is Extracellular. The chain crosses the membrane as a helical span at residues Leu426–Gly446. The Cytoplasmic segment spans residues Glu447–Ser484. A helical membrane pass occupies residues Leu485–Pro505. Over Glu506 to Leu551 the chain is Extracellular. A disordered region spans residues Glu520 to Leu551.

Belongs to the major facilitator (TC 2.A.1) superfamily. Organic cation transporter (TC 2.A.1.19) family. Glycosylated. Glycosylation is necessary for proper targeting of the transporter to the plasma membrane.

The protein resides in the basolateral cell membrane. It localises to the basal cell membrane. It catalyses the reaction (6R)-L-erythro-5,6,7,8-tetrahydrobiopterin(out) + a dicarboxylate(in) = (6R)-L-erythro-5,6,7,8-tetrahydrobiopterin(in) + a dicarboxylate(out). It carries out the reaction L-erythro-7,8-dihydrobiopterin(out) + a dicarboxylate(in) = L-erythro-7,8-dihydrobiopterin(in) + a dicarboxylate(out). The enzyme catalyses L-sepiapterin(out) + a dicarboxylate(in) = L-sepiapterin(in) + a dicarboxylate(out). The catalysed reaction is prostaglandin F2alpha(out) + a dicarboxylate(in) = prostaglandin F2alpha(in) + a dicarboxylate(out). It catalyses the reaction prostaglandin E2(out) + a dicarboxylate(in) = prostaglandin E2(in) + a dicarboxylate(out). It carries out the reaction 3',5'-cyclic AMP(out) + a dicarboxylate(in) = 3',5'-cyclic AMP(in) + a dicarboxylate(out). The enzyme catalyses 3',5'-cyclic GMP(out) + a dicarboxylate(in) = 3',5'-cyclic GMP(in) + a dicarboxylate(out). The catalysed reaction is urate(out) + a dicarboxylate(in) = urate(in) + a dicarboxylate(out). It catalyses the reaction kynurenate(out) + glutarate(in) = kynurenate(in) + glutarate(out). It carries out the reaction (indol-3-yl)acetate(out) + a dicarboxylate(in) = (indol-3-yl)acetate(in) + a dicarboxylate(out). The enzyme catalyses indoxyl sulfate(out) + a dicarboxylate(in) = indoxyl sulfate(in) + a dicarboxylate(out). The catalysed reaction is N-benzoylglycine(out) + a dicarboxylate(in) = N-benzoylglycine(in) + a dicarboxylate(out). It catalyses the reaction 3-carboxy-4-methyl-5-propyl-2-furanpropanoate(out) + a dicarboxylate(in) = 3-carboxy-4-methyl-5-propyl-2-furanpropanoate(in) + a dicarboxylate(out). Its function is as follows. Secondary active transporter that functions as a Na(+)-independent organic anion (OA)/dicarboxylate antiporter where the uptake of one molecule of OA into the cell is coupled with an efflux of one molecule of intracellular dicarboxylate such as 2-oxoglutarate or glutarate. Mediates the uptake of OA across the basolateral side of proximal tubule epithelial cells, thereby contributing to the renal elimination of endogenous OA from the systemic circulation into the urine. Functions as a biopterin transporters involved in the uptake and the secretion of coenzymes tetrahydrobiopterin (BH4), dihydrobiopterin (BH2) and sepiapterin to urine, thereby determining baseline levels of blood biopterins. Transports prostaglandin E2 (PGE2) and prostaglandin F2-alpha (PGF2-alpha) and may contribute to their renal excretion. Also mediates the uptake of cyclic nucleotides such as cAMP and cGMP. Involved in the transport of neuroactive tryptophan metabolites kynurenate (KYNA) and xanthurenate (XA) and may contribute to their secretion from the brain. May transport glutamate. Also involved in the disposition of uremic toxins and potentially toxic xenobiotics by the renal organic anion secretory pathway, helping reduce their undesired toxicological effects on the body. Uremic toxins include the indoxyl sulfate (IS), hippurate/N-benzoylglycine (HA), indole acetate (IA), 3-carboxy-4- methyl-5-propyl-2-furanpropionate (CMPF) and urate. Xenobiotics include the mycotoxin ochratoxin (OTA). May also contribute to the transport of organic compounds in testes across the blood-testis-barrier. May also work as a bidirectional OA/dicarboxylate exchanger. This is Solute carrier family 22 member 6 from Oryctolagus cuniculus (Rabbit).